Reading from the N-terminus, the 1729-residue chain is MVGELRYREFRVPLGPGLHAYPDELIRQRVGHDGHPEYQIRWLILRRGDEGDGGSGQVDCKAEHILLWMSKDEIYANCHKMLGEDGQVIGPSQESTGEVGALDKSVLEEMETDVKSLIQRALRQLEECVGTIPPAPLLHTVHVLSAYASIEPLTGVFKDPRVLDLLMHMLSSPDYQIRWSAGRMIQALSSHDAGEGQCGEEGKAGEELGRLRDSQDTVAGASDLIRTRTQILLSLSQQEAIEKHLDFDSRCALLALFAQATLSEHPMSFEGIQLPQVPGRVLFSLVKRYLHVTSLLDQLNDSAAEPGAQNTSAPEEWSGERGQLELEFSMAMGTLISELVQAIRWDQASDRPRSSARSPGSIFQPQLADVSPGLPATQAQPSFRRSRHFRPRSEFASGNTYALYVRDTLQPGMRVRMLDEYEEISAGDEGEFRQSNNGVPPVQVLWESTGRTYWVHWHMLEILGFEEDIEDMVEADEYQGAVASRVLGRALPAWRWRPMTELYAVPYVLPEDEDSEECEHLTLAEWWELLFFIKKLDGPDHQEVLQILQENLDGEILDDEILAELAVPIELAQDLLLTLPQRLNDSALRDLINCHVYKKYGPEALAGNPAYPSLLEAQEDVLLEAQAQAKDSEDAAKVEAKEPPSQSPNTPLQRLVEGYGPAGKILLDLEQALSSEGTQENKVKPLLLQLQRQPQPFLALMQSLDTPETNRTLHLTVLRILKQLVDFPEALLLPWHEAVDACMACLRSPNTDREVLQELIFFLHRLTSVSRDYAVVLNQLGARDAISKALEKHLGKLELAQELRDMVFKCEKHAHLYRELITNILGGCIQMVLGQIEDHRRTHRPINIPFFDVFLRYLCQGSSVEVKEDKCWEKVEVSSNPHRASKLTDRNPKTYWESNGSAGSRYITLHMRQGILIRQLTLLVASEDSSYMPARVVVCGGDSTSSLHTELNSVNVMPSASRVILLENLTRFWPIIQIRIKRCQQGGIDTRIRGLETLGPKPTFWPVFREQLCRHTRLFYMVRAQAWSQDMAEDRRSLLHLSSRLNGALRQEQNFADRFLPDNEAAQALGKTCWEALVSPVVQNITSPDEDGISPLGWLLDQYLECQEAVFNPQSRGPAFFSRVRRLTHLLVHVEPCEAPPPVVATPRPKGRNRSHDWSSLATRGLPSSIMRNLTRCRRAVVEKQVNNFLTSSWRDDDFVPRYCEHFNILQNSSSELFGPRAAFLLALQNGCAGALLKLPFLKAAHVSEQFARHIDQQIQGSRIGGAQEMERLAQLQQCLQAVLIFSGLEIATTFEHYYQHYMADRLLGVVSSWLEGAVLEQIGPCFPNRLPQQMLQSLSTSKELQRQFHVYQLQQLDQELLKLEDTEKKIQVGHGASGKEHKSEKEEEAGAAAAVDVAEGEEEEEENEDLYYEGAMPEVSVLVLSRHCWPVASICHTLNPRTCLPSYLRGTLNRYSNFYNKSQSHPALERGSQRRLQWTWLGWAELQFGNQTLHVSTVQMWLLLYLNDLKAVSVESLLALSGLSADMLNQAIGPLTSSRGPLDLHEQKDIPGGVLKIRDGSKEPRSRWDIVRLIPPQTYLQAEGEEGRNLEKRRNLLNCLIVRILKAHGDEGLHIDQLVCLVLEAWQKGPCPPRGLVSSLGKGSACSSTDVLSCILHLLGKGTLRRHDDRPQVLSYAVPVTVMEPHTESLNPGSSGPNPPLTFHTVQIRSRGVPYASCTATQSFSTFR.

Positions 350 to 388 are disordered; sequence DRPRSSARSPGSIFQPQLADVSPGLPATQAQPSFRRSRH. Residue Ser371 is modified to Phosphoserine. Residues 392-465 form the CPH domain; sequence RSEFASGNTY…HWHMLEILGF (74 aa). Over residues 632–642 the composition is skewed to basic and acidic residues; that stretch reads SEDAAKVEAKE. Positions 632–654 are disordered; sequence SEDAAKVEAKEPPSQSPNTPLQR. One can recognise a DOC domain in the interval 845 to 1024; the sequence is PINIPFFDVF…HTRLFYMVRA (180 aa). The interval 1373–1405 is disordered; the sequence is VGHGASGKEHKSEKEEEAGAAAAVDVAEGEEEE. Lys1607 participates in a covalent cross-link: Glycyl lysine isopeptide (Lys-Gly) (interchain with G-Cter in NEDD8).

Belongs to the cullin family. As to quaternary structure, component of the 3M complex, composed of core components CUL7, CCDC8 and OBSL1. Component of the Cul7-RING(FBXW8) complex consisting of CUL7, RBX1, SKP1 and FBXW8. Within the Cul7-RING(FBXW8) complex interacts with FBXW8 and RBX1, but not with SKP1. Interacts with CUL1 (via the C-terminal domain); the interaction seems to be mediated by FBXW8; it is likely specific to FBXW8, but not other F-box proteins. Interacts (via the CPH domain) with p53/TP53; the interaction preferentially involves tetrameric and dimeric p53/TP53; this interaction recruits p53/TP53 for ubiquitination by neddylated CUL1-RBX1. The CUL7-CUL9 heterodimer seems to interact specifically with p53/TP53. Interacts with FBXW8; interaction is mutually exclusive of binding to CUL9 or p53/TP53. Interacts with CUL9; leading to inhibited CUL9 activity. Interacts with OBSL1. Interacts (as part of the 3M complex) with HDAC4 and HDAC5; it is negatively regulated by ANKRA2.

The protein resides in the cytoplasm. It is found in the cytoskeleton. The protein localises to the microtubule organizing center. Its subcellular location is the centrosome. It localises to the perinuclear region. The protein resides in the golgi apparatus. It participates in protein modification; protein ubiquitination. Core component of the 3M and Cul7-RING(FBXW8) complexes, which mediate the ubiquitination and subsequent proteasomal degradation of target proteins. Core component of the 3M complex, a complex required to regulate microtubule dynamics and genome integrity. It is unclear how the 3M complex regulates microtubules, it could act by controlling the level of a microtubule stabilizer. The Cul7-RING(FBXW8) complex alone lacks ubiquitination activity and does not promote polyubiquitination and proteasomal degradation of p53/TP53. However it mediates recruitment of p53/TP53 for ubiquitination by neddylated CUL1-RBX1. Interaction with CUL9 is required to inhibit CUL9 activity and ubiquitination of BIRC5. The Cul7-RING(FBXW8) complex also mediates ubiquitination and consequent degradation of target proteins such as GORASP1, IRS1 and MAP4K1/HPK1. Ubiquitination of GORASP1 regulates Golgi morphogenesis and dendrite patterning in brain. Mediates ubiquitination and degradation of IRS1 in a mTOR-dependent manner: the Cul7-RING(FBXW8) complex recognizes and binds IRS1 previously phosphorylated by S6 kinase (RPS6KB1 or RPS6KB2). The Cul7-RING(FBXW8) complex also mediates ubiquitination of MAP4K1/HPK1: recognizes and binds autophosphorylated MAP4K1/HPK1, leading to its degradation, thereby affecting cell proliferation and differentiation. Acts as a regulator in trophoblast cell epithelial-mesenchymal transition and placental development. While the Cul7-RING(FBXW8) and the 3M complexes are associated and involved in common processes, CUL7 and the Cul7-RING(FBXW8) complex may have additional functions. Probably plays a role in the degradation of proteins involved in endothelial proliferation and/or differentiation. This is Cullin-7 (CUL7) from Pongo abelii (Sumatran orangutan).